The chain runs to 243 residues: Triosephosphate isomerase (243 aa).

9–11 contributes to the substrate binding site; it reads NWK. Catalysis depends on H98, which acts as the Electrophile. The active-site Proton acceptor is the E167. Substrate is bound by residues G173, S205, and 226-227; that span reads GG.

Belongs to the triosephosphate isomerase family. Homodimer.

It localises to the cytoplasm. It carries out the reaction D-glyceraldehyde 3-phosphate = dihydroxyacetone phosphate. It functions in the pathway carbohydrate biosynthesis; gluconeogenesis. It participates in carbohydrate degradation; glycolysis; D-glyceraldehyde 3-phosphate from glycerone phosphate: step 1/1. Involved in the gluconeogenesis. Catalyzes stereospecifically the conversion of dihydroxyacetone phosphate (DHAP) to D-glyceraldehyde-3-phosphate (G3P). The sequence is that of Triosephosphate isomerase from Mesomycoplasma hyorhinis (Mycoplasma hyorhinis).